The sequence spans 66 residues: COP9 signalosome complex subunit 6a (66 aa).

The protein belongs to the peptidase M67A family. CSN6 subfamily. Component of the CSN complex, probably composed of CSN1, CSN2, CSN3, CSN4, CSN5 (CSN5A or CSN5B), CSN6 (CSN6A or CSN6B), CSN7 and CSN8.

Its subcellular location is the cytoplasm. It is found in the nucleus. Its function is as follows. Component of the COP9 signalosome complex (CSN), a complex involved in various cellular and developmental processes such as photomorphogenesis and auxin and jasmonate responses. The CSN complex is an essential regulator of the ubiquitin (Ubl) conjugation pathway by mediating the deneddylation of the cullin subunits of SCF-type E3 ligase complexes, leading to decrease the Ubl ligase activity of SCF. It is involved in repression of photomorphogenesis in darkness by regulating the activity of COP1-containing Ubl ligase complexes. This is COP9 signalosome complex subunit 6a (CSN6A) from Brassica oleracea (Wild cabbage).